We begin with the raw amino-acid sequence, 27 residues long: thr operon leader peptide (27 aa).

This sequence belongs to the thr operon leader peptide family.

Functionally, this protein is involved in control of the biosynthesis of threonine. The polypeptide is thr operon leader peptide (Escherichia coli O157:H7).